A 270-amino-acid polypeptide reads, in one-letter code: Glutamate racemase (270 aa).

Residues 14-15 and 46-47 contribute to the substrate site; these read DS and YG. Cys77 functions as the Proton donor/acceptor in the catalytic mechanism. Residue 78 to 79 coordinates substrate; sequence NT. The Proton donor/acceptor role is filled by Cys189. A substrate-binding site is contributed by 190 to 191; sequence TH.

This sequence belongs to the aspartate/glutamate racemases family.

The enzyme catalyses L-glutamate = D-glutamate. It functions in the pathway cell wall biogenesis; peptidoglycan biosynthesis. Functionally, provides the (R)-glutamate required for cell wall biosynthesis. The sequence is that of Glutamate racemase from Neisseria meningitidis serogroup C.